A 169-amino-acid chain; its full sequence is uncharacterized protein (169 aa).

This is an uncharacterized protein from Haemophilus influenzae (strain ATCC 51907 / DSM 11121 / KW20 / Rd).